We begin with the raw amino-acid sequence, 82 residues long: uncharacterized protein (82 aa).

A run of 3 helical transmembrane segments spans residues 4-26 (IAVL…AGHF), 31-50 (FWVA…VTLA), and 55-77 (SFIF…TLFL).

The protein localises to the cell membrane. This is an uncharacterized protein from Bacillus subtilis (strain 168).